The following is a 305-amino-acid chain: UDP-N-acetylenolpyruvoylglucosamine reductase 2 (305 aa).

Residues 33-197 (VGGKADVFVA…LEARFELEEG (165 aa)) form the FAD-binding PCMH-type domain. The active site involves R176. S226 (proton donor) is an active-site residue. E296 is a catalytic residue.

Belongs to the MurB family. The cofactor is FAD.

Its subcellular location is the cytoplasm. It carries out the reaction UDP-N-acetyl-alpha-D-muramate + NADP(+) = UDP-N-acetyl-3-O-(1-carboxyvinyl)-alpha-D-glucosamine + NADPH + H(+). It participates in cell wall biogenesis; peptidoglycan biosynthesis. Cell wall formation. The protein is UDP-N-acetylenolpyruvoylglucosamine reductase 2 (murB2) of Bacillus anthracis.